The primary structure comprises 355 residues: Peptide chain release factor 1 (355 aa).

Gln229 carries the post-translational modification N5-methylglutamine. The tract at residues 280–299 (LDRERSAARKGQVGSGDRSE) is disordered.

It belongs to the prokaryotic/mitochondrial release factor family. Post-translationally, methylated by PrmC. Methylation increases the termination efficiency of RF1.

It localises to the cytoplasm. Functionally, peptide chain release factor 1 directs the termination of translation in response to the peptide chain termination codons UAG and UAA. In Parvibaculum lavamentivorans (strain DS-1 / DSM 13023 / NCIMB 13966), this protein is Peptide chain release factor 1.